A 712-amino-acid polypeptide reads, in one-letter code: Transferrin-binding protein B (712 aa).

An N-terminal signal peptide occupies residues Met1 to Ala20. Cys21 is lipidated: N-palmitoyl cysteine. Cys21 is lipidated: S-diacylglycerol cysteine. The tract at residues Gly59–Leu196 is N-terminal handle domain. Disordered stretches follow at residues Glu78–Gln104, Pro123–Asn144, Ile223–Gly256, Asn309–Gly338, Ser364–Asn398, Ala442–Asn495, and Asn689–Arg712. A compositionally biased stretch (basic and acidic residues) spans Asp95 to Gln104. Polar residues predominate over residues Ser128–Asn144. Residues Pro197–Thr367 are N-terminal beta barrel domain. 2 stretches are compositionally biased toward low complexity: residues Ala372–Asn398 and Gly446–Ala459. The interval Asn389–Asp555 is C-terminal handle domain. Over residues Arg462–Ala475 the composition is skewed to basic and acidic residues. Polar residues-rich tracts occupy residues Ala477 to Asn495 and Asn689 to Thr700. Residues Glu556–Arg712 are C-terminal beta barrel domain.

It belongs to the TbpB family. Isotype II subfamily. Binds only human holo-transferrin (TF), via the TF C-terminus. Forms a large complex with TF and TbpA. Interacts via its C-terminal domain with Slam1.

Its subcellular location is the cell outer membrane. It localises to the cell surface. Neisseria acquires iron by extracting it from serum transferrin (TF) in its human host. Acts as a TF receptor and is required for TF utilization. Involved in the initial capture of TF. Helps select only those TF molecules that can be used as an iron source and concentrates them on the cell surface, maintaining the iron-loaded status of the TF C-terminal lobe until its delivery to TbpA. The chain is Transferrin-binding protein B from Neisseria meningitidis serogroup B (strain ATCC BAA-335 / MC58).